The primary structure comprises 764 residues: 5-methyltetrahydropteroyltriglutamate--homocysteine methyltransferase (764 aa).

Residues Arg-16–Lys-19 and Lys-121 contribute to the 5-methyltetrahydropteroyltri-L-glutamate site. L-homocysteine is bound by residues Ile-440–Ser-442 and Glu-493. L-methionine-binding positions include Ile-440–Ser-442 and Glu-493. 5-methyltetrahydropteroyltri-L-glutamate-binding positions include Arg-524–Cys-525 and Trp-570. Asp-608 is an L-homocysteine binding site. Asp-608 is an L-methionine binding site. Glu-614 is a 5-methyltetrahydropteroyltri-L-glutamate binding site. Zn(2+) is bound by residues His-650, Cys-652, and Glu-674. His-703 functions as the Proton donor in the catalytic mechanism. Cys-735 is a binding site for Zn(2+).

The protein belongs to the vitamin-B12 independent methionine synthase family. The cofactor is Zn(2+).

It catalyses the reaction 5-methyltetrahydropteroyltri-L-glutamate + L-homocysteine = tetrahydropteroyltri-L-glutamate + L-methionine. Its pathway is amino-acid biosynthesis; L-methionine biosynthesis via de novo pathway; L-methionine from L-homocysteine (MetE route): step 1/1. Catalyzes the transfer of a methyl group from 5-methyltetrahydrofolate to homocysteine resulting in methionine formation. The sequence is that of 5-methyltetrahydropteroyltriglutamate--homocysteine methyltransferase from Burkholderia lata (strain ATCC 17760 / DSM 23089 / LMG 22485 / NCIMB 9086 / R18194 / 383).